The primary structure comprises 396 residues: S-adenosylmethionine synthase (396 aa).

Residue histidine 16 participates in ATP binding. Aspartate 18 contacts Mg(2+). A K(+)-binding site is contributed by glutamate 44. Glutamate 57 and glutamine 100 together coordinate L-methionine. The flexible loop stretch occupies residues 100–110 (QSPDIAQGVDR). Residues 167–169 (DAK), 232–233 (RF), aspartate 241, 247–248 (RK), alanine 264, and lysine 268 each bind ATP. Position 241 (aspartate 241) interacts with L-methionine. Lysine 272 contributes to the L-methionine binding site.

The protein belongs to the AdoMet synthase family. Homotetramer; dimer of dimers. Mg(2+) serves as cofactor. Requires K(+) as cofactor.

The protein resides in the cytoplasm. The enzyme catalyses L-methionine + ATP + H2O = S-adenosyl-L-methionine + phosphate + diphosphate. It participates in amino-acid biosynthesis; S-adenosyl-L-methionine biosynthesis; S-adenosyl-L-methionine from L-methionine: step 1/1. Its function is as follows. Catalyzes the formation of S-adenosylmethionine (AdoMet) from methionine and ATP. The overall synthetic reaction is composed of two sequential steps, AdoMet formation and the subsequent tripolyphosphate hydrolysis which occurs prior to release of AdoMet from the enzyme. This Ralstonia pickettii (strain 12J) protein is S-adenosylmethionine synthase.